Here is a 766-residue protein sequence, read N- to C-terminus: Phosphoribosylformylglycinamidine synthase subunit PurL (766 aa).

The active site involves H46. Y49 and K88 together coordinate ATP. Residue E90 coordinates Mg(2+). Substrate-binding positions include 91–94 (SHNH) and R113. The active-site Proton acceptor is the H92. D114 contributes to the Mg(2+) binding site. Residue Q237 participates in substrate binding. D265 lines the Mg(2+) pocket. Residue 309-311 (ESQ) participates in substrate binding. Positions 520 and 557 each coordinate ATP. Position 558 (N558) interacts with Mg(2+). S560 contacts substrate.

It belongs to the FGAMS family. Monomer. Part of the FGAM synthase complex composed of 1 PurL, 1 PurQ and 2 PurS subunits.

It localises to the cytoplasm. It catalyses the reaction N(2)-formyl-N(1)-(5-phospho-beta-D-ribosyl)glycinamide + L-glutamine + ATP + H2O = 2-formamido-N(1)-(5-O-phospho-beta-D-ribosyl)acetamidine + L-glutamate + ADP + phosphate + H(+). Its pathway is purine metabolism; IMP biosynthesis via de novo pathway; 5-amino-1-(5-phospho-D-ribosyl)imidazole from N(2)-formyl-N(1)-(5-phospho-D-ribosyl)glycinamide: step 1/2. In terms of biological role, part of the phosphoribosylformylglycinamidine synthase complex involved in the purines biosynthetic pathway. Catalyzes the ATP-dependent conversion of formylglycinamide ribonucleotide (FGAR) and glutamine to yield formylglycinamidine ribonucleotide (FGAM) and glutamate. The FGAM synthase complex is composed of three subunits. PurQ produces an ammonia molecule by converting glutamine to glutamate. PurL transfers the ammonia molecule to FGAR to form FGAM in an ATP-dependent manner. PurS interacts with PurQ and PurL and is thought to assist in the transfer of the ammonia molecule from PurQ to PurL. This is Phosphoribosylformylglycinamidine synthase subunit PurL from Synechococcus sp. (strain JA-3-3Ab) (Cyanobacteria bacterium Yellowstone A-Prime).